A 191-amino-acid polypeptide reads, in one-letter code: UPF0302 protein SA1295 (191 aa).

Belongs to the UPF0302 family.

In Staphylococcus aureus (strain N315), this protein is UPF0302 protein SA1295.